Here is a 594-residue protein sequence, read N- to C-terminus: DNA mismatch repair protein MutL (594 aa).

Belongs to the DNA mismatch repair MutL/HexB family.

Functionally, this protein is involved in the repair of mismatches in DNA. It is required for dam-dependent methyl-directed DNA mismatch repair. May act as a 'molecular matchmaker', a protein that promotes the formation of a stable complex between two or more DNA-binding proteins in an ATP-dependent manner without itself being part of a final effector complex. This Tolumonas auensis (strain DSM 9187 / NBRC 110442 / TA 4) protein is DNA mismatch repair protein MutL.